The chain runs to 441 residues: MMKPQHGGMAGHGGGRTRSPFLTSYALTLAFITFVSVLYFKDFSSTLHQPFLTRPPPHRRQIARPRAPSHHHGGGSSSGGGDVVPPFAVGAAAAAGCDVGVGEWVYDEAARPWYEEEECPYIQPQLTCQAHGRPDTAYQHWRWQPRGCSLPSFNATLMLEMLRGKRMMFVGDSLNRGQYVSLVCLLHRSIPESSKSMETFDSLTVFRAKNYNATIEFYWAPFLAESNSDDAVVHRIADRIVRGTALEKHARFWKGADILVFNSYLWWMTGQKMKILQGSFEDKSKDIVEMETEEAYGMVLNAVVRWVENNMNPRNSRVFFVTMSPTHTRSKDWGDDSDGNCYNQTTPIRDLSYWGPGTSKGLMRVIGEVFSTSKVPVGIVNITQLSEYRKDAHTQIYKKQWNPLTPEQIANPKSYADCTHWCLPGLQDTWNELLYSKLFFP.

Residues 1-19 (MMKPQHGGMAGHGGGRTRS) are Cytoplasmic-facing. The helical; Signal-anchor for type II membrane protein transmembrane segment at 20-40 (PFLTSYALTLAFITFVSVLYF) threads the bilayer. At 41-441 (KDFSSTLHQP…ELLYSKLFFP (401 aa)) the chain is on the lumenal side. The tract at residues 50 to 81 (PFLTRPPPHRRQIARPRAPSHHHGGGSSSGGG) is disordered. Residues 56-73 (PPHRRQIARPRAPSHHHG) show a composition bias toward basic residues. Cystine bridges form between cysteine 97–cysteine 148, cysteine 119–cysteine 184, cysteine 128–cysteine 422, and cysteine 341–cysteine 418. Asparagine 154 carries N-linked (GlcNAc...) asparagine glycosylation. The GDS motif motif lies at 171 to 173 (GDS). Serine 173 acts as the Nucleophile in catalysis. N-linked (GlcNAc...) asparagine glycosylation is found at asparagine 212, asparagine 343, and asparagine 381. Aspartate 417 acts as the Proton donor in catalysis. Positions 417-420 (DCTH) match the DXXH motif motif. The active-site Proton acceptor is histidine 420.

This sequence belongs to the PC-esterase family. TBL subfamily. In terms of tissue distribution, expressed in roots, leaves and stems.

Its subcellular location is the golgi apparatus membrane. Probable xylan acetyltransferase required for 2-O- and 3-O-monoacetylation of xylosyl residues in xylan. Possesses extremely low activity in vitro. The polypeptide is Probable xylan O-acetyltransferase 10 (Oryza sativa subsp. japonica (Rice)).